The primary structure comprises 219 residues: Leukocyte surface antigen CD53 (219 aa).

Topologically, residues 2–11 are cytoplasmic; it reads GMSSLKLLKY. A helical transmembrane segment spans residues 12–32; it reads VLFFFNFLFWVCGCCILGFGI. Topologically, residues 33-54 are extracellular; that stretch reads HLLVQNTYGILFRNLPFLTLGN. The chain crosses the membrane as a helical span at residues 55 to 69; it reads VLVIVGSIIMVVAFL. Residues 70-80 lie on the Cytoplasmic side of the membrane; that stretch reads GCMGSIKENKC. Residues 81-106 traverse the membrane as a helical segment; sequence LLMSFFVLLLLILLAEVTLAILLFVY. Topologically, residues 107-181 are extracellular; it reads EKKINTLVAE…KKGQAWFHSN (75 aa). N-linked (GlcNAc...) asparagine glycosylation is found at Asn119, Asn129, and Asn148. The helical transmembrane segment at 182–206 threads the bilayer; it reads FLYIGIVTICVCVIQVLGMSFALTL. Over 207–219 the chain is Cytoplasmic; that stretch reads NCQIDKTSQALGL.

It belongs to the tetraspanin (TM4SF) family. In terms of assembly, interacts with SCIMP. Interacts with CD45/PTPRC. Interacts with IL7R. Interacts with RBL2 and PPP2CA. Spleen and thymus, B-cells, monocytes, macrophages, neutrophils, single (CD4 or CD8) positive thymocytes, peripheral T-cells.

It is found in the cell membrane. The protein resides in the cell junction. It localises to the membrane. Functionally, required for efficient formation of myofibers in regenerating muscle at the level of cell fusion. May be involved in growth regulation in hematopoietic cells. The chain is Leukocyte surface antigen CD53 (Cd53) from Rattus norvegicus (Rat).